Here is a 284-residue protein sequence, read N- to C-terminus: Bifunctional protein FolD (284 aa).

Position 166–168 (166–168) interacts with NADP(+); the sequence is GAS.

The protein belongs to the tetrahydrofolate dehydrogenase/cyclohydrolase family. As to quaternary structure, homodimer.

It catalyses the reaction (6R)-5,10-methylene-5,6,7,8-tetrahydrofolate + NADP(+) = (6R)-5,10-methenyltetrahydrofolate + NADPH. The enzyme catalyses (6R)-5,10-methenyltetrahydrofolate + H2O = (6R)-10-formyltetrahydrofolate + H(+). Its pathway is one-carbon metabolism; tetrahydrofolate interconversion. In terms of biological role, catalyzes the oxidation of 5,10-methylenetetrahydrofolate to 5,10-methenyltetrahydrofolate and then the hydrolysis of 5,10-methenyltetrahydrofolate to 10-formyltetrahydrofolate. The sequence is that of Bifunctional protein FolD from Legionella pneumophila (strain Paris).